We begin with the raw amino-acid sequence, 20 residues long: YYTVLFGVSRALGLPLERPK.

This sequence belongs to the citrate synthase family. In terms of assembly, homodimer.

The enzyme catalyses oxaloacetate + acetyl-CoA + H2O = citrate + CoA + H(+). It participates in carbohydrate metabolism; tricarboxylic acid cycle; isocitrate from oxaloacetate: step 1/2. The sequence is that of Citrate synthase from Populus euphratica (Euphrates poplar).